We begin with the raw amino-acid sequence, 513 residues long: Transmembrane protein 151B (513 aa).

The interval methionine 1–proline 29 is disordered. The span at glutamate 14–arginine 28 shows a compositional bias: basic and acidic residues. 3 consecutive transmembrane segments (helical) span residues cysteine 46–threonine 66, tyrosine 93–tryptophan 113, and leucine 274–proline 294. N-linked (GlcNAc...) asparagine glycans are attached at residues asparagine 366, asparagine 418, and asparagine 505.

The protein belongs to the TMEM151 family.

It is found in the membrane. The chain is Transmembrane protein 151B (tmem151b) from Danio rerio (Zebrafish).